The sequence spans 51 residues: Insulin (51 aa).

Cystine bridges form between Cys8-Cys37, Cys20-Cys50, and Cys36-Cys41.

This sequence belongs to the insulin family. Heterodimer of a B chain and an A chain linked by two disulfide bonds.

It localises to the secreted. Insulin decreases blood glucose concentration. It increases cell permeability to monosaccharides, amino acids and fatty acids. It accelerates glycolysis, the pentose phosphate cycle, and glycogen synthesis in liver. The chain is Insulin (ins) from Platichthys flesus (European flounder).